The chain runs to 1033 residues: Translation initiation factor IF-2 (1033 aa).

Positions 49-432 (AFQQGGGNGR…APSVGGVMLP (384 aa)) are disordered. The segment covering 59-113 (SAGRPAAPKKAAPRPSAPSPAQAGPSQAAPAAGDRAAAPRPSAAPKAPAAQQPAA) has biased composition (low complexity). Composition is skewed to pro residues over residues 114–140 (PSAP…PAPA) and 148–164 (PAAP…PSGP). Positions 171–189 (PGAPKPGGARPSGPGQDRG) are enriched in low complexity. Over residues 190 to 201 (QQGGQGRPGGQR) the composition is skewed to gly residues. The segment covering 236 to 246 (APRPQGGPRPG) has biased composition (pro residues). Positions 247-268 (GPGGAPGGGPRPQGPGGQGGGP) are enriched in gly residues. The span at 305–314 (MMPQRPAAGP) shows a compositional bias: low complexity. Gly residues predominate over residues 318–401 (PGGGGRGPGG…GTQGAFGRPG (84 aa)). A compositionally biased stretch (basic residues) spans 405–414 (RRGRKSKRQR). The tr-type G domain maps to 526-698 (VRPPVVTVMG…VVLTADASLD (173 aa)). The tract at residues 535–542 (GHVDHGKT) is G1. 535–542 (GHVDHGKT) is a GTP binding site. The tract at residues 560 to 564 (GITQH) is G2. Positions 585 to 588 (DTPG) are G3. GTP is bound by residues 585 to 589 (DTPGH) and 639 to 642 (NKID). Residues 639 to 642 (NKID) form a G4 region. The tract at residues 675-677 (SAK) is G5.

The protein belongs to the TRAFAC class translation factor GTPase superfamily. Classic translation factor GTPase family. IF-2 subfamily.

The protein resides in the cytoplasm. One of the essential components for the initiation of protein synthesis. Protects formylmethionyl-tRNA from spontaneous hydrolysis and promotes its binding to the 30S ribosomal subunits. Also involved in the hydrolysis of GTP during the formation of the 70S ribosomal complex. This Streptomyces coelicolor (strain ATCC BAA-471 / A3(2) / M145) protein is Translation initiation factor IF-2.